A 533-amino-acid polypeptide reads, in one-letter code: Inositol-3-phosphate synthase (533 aa).

Residue Thr48 is modified to Phosphothreonine. NAD(+) is bound by residues Gly74, Gly75, Asn76, Asn77, and Asp148. Ser177 and Ser184 each carry phosphoserine. NAD(+) contacts are provided by Ser184, Ile185, Gln195, Asp196, Arg198, Thr244, Ala245, Asn246, Thr247, Gly295, Ser296, Asp320, Leu321, Ser323, Asn354, Asn355, and Asp356. The residue at position 296 (Ser296) is a Phosphoserine. Residue Ser368 is modified to Phosphoserine. Position 369 (Lys369) interacts with NAD(+). Ser374 is modified (phosphoserine). 4 residues coordinate NAD(+): Gly409, Asp410, Asp438, and Ser439.

The protein belongs to the myo-inositol 1-phosphate synthase family. Homotetramer. The cofactor is NAD(+). Phosphorylation at Ser-184 and Ser-374 is associated with a decrease in activity. Increasingly phosphorylated in presence of valproate.

It localises to the cytoplasm. It catalyses the reaction D-glucose 6-phosphate = 1D-myo-inositol 3-phosphate. Its pathway is polyol metabolism; myo-inositol biosynthesis; myo-inositol from D-glucose 6-phosphate: step 1/2. Competitively inhibited by myo-2-inosose 1-phosphate, which is also an intermediate in the catalytic reaction. Competitively inhibited by 2-deoxy-myo-inositol 1-phosphate (dMIP), 1-deoxy-1-(phosphonomethyl)-myo-2-inosose (DPMI), dihydroxyacetone phosphate (DHAP), 6-deoxy-D-glucose 6-(E)-vinylhomophosphonate, 6-deoxy-D-glucitol 6-(E)-vinylhomophosphonate, 2,6-dideoxy-D-glucose 6-(E)-vinylhomophosphonate and 2,6-dideoxy-D-glucitol 6-(E)-vinylhomophosphonate. Inhibited by 2-deoxyglucitol 6-phosphate (dgtolP). Key enzyme in myo-inositol biosynthesis pathway that catalyzes the conversion of glucose 6-phosphate to 1-myo-inositol 1-phosphate in a NAD-dependent manner. Rate-limiting enzyme in the synthesis of all inositol-containing compounds. The polypeptide is Inositol-3-phosphate synthase (INO1) (Saccharomyces cerevisiae (strain ATCC 204508 / S288c) (Baker's yeast)).